The chain runs to 369 residues: Anhydro-N-acetylmuramic acid kinase (369 aa).

An ATP-binding site is contributed by 11-18 (GTSMDAVD).

Belongs to the anhydro-N-acetylmuramic acid kinase family.

The enzyme catalyses 1,6-anhydro-N-acetyl-beta-muramate + ATP + H2O = N-acetyl-D-muramate 6-phosphate + ADP + H(+). The protein operates within amino-sugar metabolism; 1,6-anhydro-N-acetylmuramate degradation. It functions in the pathway cell wall biogenesis; peptidoglycan recycling. In terms of biological role, catalyzes the specific phosphorylation of 1,6-anhydro-N-acetylmuramic acid (anhMurNAc) with the simultaneous cleavage of the 1,6-anhydro ring, generating MurNAc-6-P. Is required for the utilization of anhMurNAc either imported from the medium or derived from its own cell wall murein, and thus plays a role in cell wall recycling. The chain is Anhydro-N-acetylmuramic acid kinase from Idiomarina loihiensis (strain ATCC BAA-735 / DSM 15497 / L2-TR).